Here is a 125-residue protein sequence, read N- to C-terminus: Small ribosomal subunit protein eS8 (125 aa).

Positions M1–R20 are disordered.

The protein belongs to the eukaryotic ribosomal protein eS8 family. Part of the 30S ribosomal subunit.

In Archaeoglobus fulgidus (strain ATCC 49558 / DSM 4304 / JCM 9628 / NBRC 100126 / VC-16), this protein is Small ribosomal subunit protein eS8 (rps8e).